The primary structure comprises 238 residues: Large ribosomal subunit protein uL2 (238 aa).

The disordered stretch occupies residues 197–219; it reads ASDHPFGGKRHSNHSKPFTVSKW.

It belongs to the universal ribosomal protein uL2 family. In terms of assembly, part of the 50S ribosomal subunit. Forms a bridge to the 30S subunit in the 70S ribosome.

Functionally, one of the primary rRNA binding proteins. Required for association of the 30S and 50S subunits to form the 70S ribosome, for tRNA binding and peptide bond formation. It has been suggested to have peptidyltransferase activity; this is somewhat controversial. Makes several contacts with the 16S rRNA in the 70S ribosome. The sequence is that of Large ribosomal subunit protein uL2 from Nanoarchaeum equitans (strain Kin4-M).